The chain runs to 341 residues: Delta(1)-pyrroline-2-carboxylate/Delta(1)-piperideine-2-carboxylate reductase (341 aa).

S52 functions as the Charge relay system in the catalytic mechanism. The active-site Proton donor is the H53. Position 57 (R57) interacts with substrate. Residue 125–129 participates in NADP(+) binding; sequence HFAAL. T165 is a binding site for substrate. 183–185 contacts NADP(+); the sequence is DMA. Substrate is bound at residue 191–192; the sequence is HG. D193 serves as the catalytic Charge relay system. NADP(+)-binding positions include 235–236 and 308–314; these read HK and RMPGERR.

The protein belongs to the LDH2/MDH2 oxidoreductase family. As to quaternary structure, homodimer.

It carries out the reaction L-pipecolate + NADP(+) = Delta(1)-piperideine-2-carboxylate + NADPH + H(+). The enzyme catalyses L-proline + NADP(+) = 1-pyrroline-2-carboxylate + NADPH + H(+). It catalyses the reaction N-methyl-L-alanine + NADP(+) + H2O = methylamine + pyruvate + NADPH + H(+). Its activity is regulated as follows. Is inhibited by the substrate analog pyrrole-2-carboxylate, but not by N-formylphenylalanine. Functionally, catalyzes the reduction of both Delta(1)-pyrroline-2-carboxylate (Pyr2C) and Delta(1)-piperideine-2-carboxylate (Pip2C) to L-proline and L-pipecolate, respectively, using NADPH as the electron donor. Can use NADH instead of NADPH, although with much less efficiency. Plays an essential role in the catabolism of D-proline and D-lysine, which allows P.putida to grow on each of these amino-acids as a sole carbon source; D-lysine appears to be catabolized only through the pipecolate pathway. Can also catalyze the reverse oxidation reactions, albeit at a much lower rate. To a lesser extent, is able to catalyze in vitro the NADPH-dependent formation of N-alkyl-L-amino acids from the corresponding alpha-oxo acids and alkylamines, e.g. the formation of N-methylalanine from pyruvate and N-methylamine; cannot use ammonia as substrate for these reductive amination reactions. Shows neither malate dehydrogenase nor lactate dehydrogenase activity. This chain is Delta(1)-pyrroline-2-carboxylate/Delta(1)-piperideine-2-carboxylate reductase, found in Pseudomonas putida (Arthrobacter siderocapsulatus).